The sequence spans 440 residues: Transposon Ty1-GR1 Gag polyprotein (440 aa).

Positions Met1–Ser16 are enriched in low complexity. 3 disordered regions span residues Met1–Gln93, Pro126–Pro173, and Gly352–Tyr440. Composition is skewed to polar residues over residues Thr48–Ser60, Ser71–Gln93, and Gln127–Phe152. A compositionally biased stretch (low complexity) spans Thr153 to Thr165. Positions Asn299–His401 are RNA-binding. Positions Asn402 to Ser418 are enriched in low complexity. Residue Ser416 is modified to Phosphoserine. The span at Lys419–Asn428 shows a compositional bias: polar residues. Basic and acidic residues predominate over residues Asn429–Tyr440.

Homotrimer.

The protein localises to the cytoplasm. In terms of biological role, capsid protein (CA) is the structural component of the virus-like particle (VLP), forming the shell that encapsulates the retrotransposons dimeric RNA genome. The particles are assembled from trimer-clustered units and there are holes in the capsid shells that allow for the diffusion of macromolecules. CA also has nucleocapsid-like chaperone activity, promoting primer tRNA(i)-Met annealing to the multipartite primer-binding site (PBS), dimerization of Ty1 RNA and initiation of reverse transcription. In Saccharomyces cerevisiae (strain ATCC 204508 / S288c) (Baker's yeast), this protein is Transposon Ty1-GR1 Gag polyprotein (TY1A-GR1).